The chain runs to 286 residues: E3 SUMO-protein ligase K-bZIP (286 aa).

2 disordered regions span residues Met1–Glu22 and Trp106–Arg130.

In terms of assembly, interacts with host HDAC1 and HDAC2, these interactions suppress HDAC activities. Interacts with protein ORF57. Interacts with protein vPK. In terms of processing, sumoylated.

It functions in the pathway protein modification; protein sumoylation. Its function is as follows. SUMO E3 ligase that plays a role in viral gene regulation and is essential for viral reactivation. Disrupts host G1 cell cycle control thus allowing viral transcription and translation to proceed at the early stages of infection. Catalyzes its own SUMO modification as well as that of its interacting partners such as host TP53 and RB1. Regulates viral gene expression and reactivation and may mediate the SUMOylation of viral promoters in the low methylated 'Lys-9' histone H3 (H3K9me) region which results in a diminution of viral gene expression after reactivation. SUMOylates also host histone lysine demethylase 4A/KDM4A, an essential step for complete enrichment of SUMO-2/3 on the viral genome during viral transactivation and reactivation. The polypeptide is E3 SUMO-protein ligase K-bZIP (K8) (Human herpesvirus 8 type P (isolate GK18) (HHV-8)).